The chain runs to 273 residues: MIPVKVENNTSLDQVQDALNCVGYAVVEDVLDEASLAATRDRMYRVQERILTEIGKERLARAGELGVLRLMMKYDPHFFTFLEIPEVLSIVDRVLSETAILHLQNGFILPSFPPFSTPDVFQNAFHQDFPRVLSGYIASVNIMFAIDPFTRDTGATLVVPGSHQRIEKPDHTYLARNAVPVQCAAGSLFVFDSTLWHAAGRNTSGKDRLAINHQFTRSFFKQQIDYVRALGDAVVLEQPARTQQLLGWYSRVVTNLDEYYQPPDKRLYRKGQG.

Belongs to the PhyH family.

This is an uncharacterized protein from Mycobacterium tuberculosis (strain ATCC 25618 / H37Rv).